A 405-amino-acid chain; its full sequence is Patatin-like protein 2 (405 aa).

The region spanning 24–230 (LSIDGGGVRG…AANNPTLCAM (207 aa)) is the PNPLA domain. A GXGXXG motif is present at residues 28–33 (GGGVRG). Residues 66-70 (GTSTG) carry the GXSXG motif. Serine 68 (nucleophile) is an active-site residue. Aspartate 217 functions as the Proton acceptor in the catalytic mechanism. The DGA/G signature appears at 217 to 219 (DGG).

It belongs to the patatin family.

Its function is as follows. Possesses non-specific lipolytic acyl hydrolase (LAH) activity. Hydrolyzes phospholipids as well as galactolipids. May play a role in disease resistance. This chain is Patatin-like protein 2 (PLP2), found in Oryza sativa subsp. indica (Rice).